We begin with the raw amino-acid sequence, 410 residues long: Protein king tubby 1 (410 aa).

2 disordered regions span residues 44–109 and 121–159; these read QFMM…STRH and ISPA…EGDV. Over residues 47-72 the composition is skewed to polar residues; the sequence is MSPNNPDQILTSTGNASVTTTPTSPY. The span at 132–143 shows a compositional bias: basic and acidic residues; sequence SHHDSSSGKSVE.

Belongs to the TUB family.

The protein resides in the cytoplasm. It is found in the nucleus. This is Protein king tubby 1 (king-tubby1) from Aedes aegypti (Yellowfever mosquito).